We begin with the raw amino-acid sequence, 270 residues long: Flavodoxin/ferredoxin--NADP reductase (270 aa).

Positions 12–113 (VLPDAQTVTS…PKPVGTLVID (102 aa)) constitute an FAD-binding FR-type domain. Residues 62–65 (RAYS), 78–80 (YSI), and 86–88 (PLT) each bind FAD. Threonine 126 is a binding site for NADP(+). Residue threonine 128 participates in FAD binding. Residues arginine 156, 192 to 193 (TR), arginine 201, and aspartate 238 contribute to the NADP(+) site. FAD is bound at residue 264–270 (AFVGEGI).

The protein belongs to the ferredoxin--NADP reductase type 1 family. Monomer. FAD serves as cofactor.

The protein resides in the cytoplasm. The catalysed reaction is 2 reduced [2Fe-2S]-[ferredoxin] + NADP(+) + H(+) = 2 oxidized [2Fe-2S]-[ferredoxin] + NADPH. The enzyme catalyses reduced [flavodoxin] + NADP(+) = oxidized [flavodoxin] + NADPH + 2 H(+). Its function is as follows. Transports electrons between flavodoxin or ferredoxin and NADPH. In Rhodobacter capsulatus (Rhodopseudomonas capsulata), this protein is Flavodoxin/ferredoxin--NADP reductase.